Here is a 113-residue protein sequence, read N- to C-terminus: U11-theraphotoxin-Hhn1f (113 aa).

An N-terminal signal peptide occupies residues 1–21 (MNTVRVTFLLVFVLAVSLGQA). Positions 22-74 (DKDENRMEMQEKTEQGKSYLDFAENLLLQKLEELEAKLLEEDSKESRNSRQKR) are excised as a propeptide. The interval 61–82 (EEDSKESRNSRQKRCIGEGVPC) is disordered. 3 disulfides stabilise this stretch: cysteine 75–cysteine 90, cysteine 82–cysteine 95, and cysteine 89–cysteine 110.

This sequence belongs to the neurotoxin 14 (magi-1) family. 01 (HNTX-16) subfamily. Expressed by the venom gland.

The protein resides in the secreted. In terms of biological role, probable ion channel inhibitor. In Cyriopagopus hainanus (Chinese bird spider), this protein is U11-theraphotoxin-Hhn1f.